The sequence spans 196 residues: Holliday junction branch migration complex subunit RuvA (196 aa).

The domain I stretch occupies residues 1 to 63 (MYDYIKGTLV…DDAHLLFGFH (63 aa)). A domain II region spans residues 64 to 142 (TEDEKEVFLK…ELPAETTNTT (79 aa)). Residues 143 to 146 (ANQT) are flexible linker. The segment at 147-196 (AGNQQLDEAMEALLALGYKSTELKKVKAFFEDTNETAEQYIKSALKMLMK) is domain III.

Belongs to the RuvA family. As to quaternary structure, homotetramer. Forms an RuvA(8)-RuvB(12)-Holliday junction (HJ) complex. HJ DNA is sandwiched between 2 RuvA tetramers; dsDNA enters through RuvA and exits via RuvB. An RuvB hexamer assembles on each DNA strand where it exits the tetramer. Each RuvB hexamer is contacted by two RuvA subunits (via domain III) on 2 adjacent RuvB subunits; this complex drives branch migration. In the full resolvosome a probable DNA-RuvA(4)-RuvB(12)-RuvC(2) complex forms which resolves the HJ.

The protein resides in the cytoplasm. The RuvA-RuvB-RuvC complex processes Holliday junction (HJ) DNA during genetic recombination and DNA repair, while the RuvA-RuvB complex plays an important role in the rescue of blocked DNA replication forks via replication fork reversal (RFR). RuvA specifically binds to HJ cruciform DNA, conferring on it an open structure. The RuvB hexamer acts as an ATP-dependent pump, pulling dsDNA into and through the RuvAB complex. HJ branch migration allows RuvC to scan DNA until it finds its consensus sequence, where it cleaves and resolves the cruciform DNA. This chain is Holliday junction branch migration complex subunit RuvA, found in Streptococcus thermophilus (strain CNRZ 1066).